We begin with the raw amino-acid sequence, 264 residues long: tRNA pseudouridine synthase A (264 aa).

The Nucleophile role is filled by D51. Y109 is a binding site for substrate.

Belongs to the tRNA pseudouridine synthase TruA family. Homodimer.

It carries out the reaction uridine(38/39/40) in tRNA = pseudouridine(38/39/40) in tRNA. Formation of pseudouridine at positions 38, 39 and 40 in the anticodon stem and loop of transfer RNAs. In Vibrio atlanticus (strain LGP32) (Vibrio splendidus (strain Mel32)), this protein is tRNA pseudouridine synthase A.